A 211-amino-acid polypeptide reads, in one-letter code: FMN-dependent NADH:quinone oxidoreductase 3 (211 aa).

102–105 (MWNF) contacts FMN.

The protein belongs to the azoreductase type 1 family. In terms of assembly, homodimer. FMN is required as a cofactor.

The catalysed reaction is 2 a quinone + NADH + H(+) = 2 a 1,4-benzosemiquinone + NAD(+). It carries out the reaction N,N-dimethyl-1,4-phenylenediamine + anthranilate + 2 NAD(+) = 2-(4-dimethylaminophenyl)diazenylbenzoate + 2 NADH + 2 H(+). Its function is as follows. Quinone reductase that provides resistance to thiol-specific stress caused by electrophilic quinones. In terms of biological role, also exhibits azoreductase activity. Catalyzes the reductive cleavage of the azo bond in aromatic azo compounds to the corresponding amines. This is FMN-dependent NADH:quinone oxidoreductase 3 from Bacillus cereus (strain ZK / E33L).